Here is a 289-residue protein sequence, read N- to C-terminus: Iodotyrosine deiodinase 1 (289 aa).

The helical transmembrane segment at 1–21 (MYFLTPILVAILCILVVWIFK) threads the bilayer. The segment covering 29–58 (KKKGEPRTRAEARPWVDEDLKDSSDLHQAE) has biased composition (basic and acidic residues). A disordered region spans residues 29–69 (KKKGEPRTRAEARPWVDEDLKDSSDLHQAEEDADEWQESEE). A compositionally biased stretch (acidic residues) spans 59 to 69 (EDADEWQESEE). Residues 100–104 (RRSVR), S128, and 128–129 (SG) each bind FMN. 3-iodo-L-tyrosine contacts are provided by A130, E157, Y161, and K182. Residues 237–239 (TTT) and R279 contribute to the FMN site.

Belongs to the nitroreductase family. In terms of assembly, homodimer. The cofactor is FMN. In terms of tissue distribution, expressed at a high level in thyroid gland (at protein level). Expressed at a high level in thyroid gland and at lower level in kidney and trachea.

Its subcellular location is the cell membrane. It localises to the cytoplasmic vesicle membrane. The catalysed reaction is 2 iodide + L-tyrosine + 2 NADP(+) = 3,5-diiodo-L-tyrosine + 2 NADPH + H(+). The enzyme catalyses iodide + L-tyrosine + NADP(+) = 3-iodo-L-tyrosine + NADPH. It catalyses the reaction 3-iodo-L-tyrosine + iodide + NADP(+) = 3,5-diiodo-L-tyrosine + NADPH + H(+). It carries out the reaction L-tyrosine + chloride + NADP(+) = 3-chloro-L-tyrosine + NADPH. The catalysed reaction is bromide + L-tyrosine + NADP(+) = 3-bromo-L-tyrosine + NADPH. Functionally, catalyzes the dehalogenation of halotyrosines such as 3-bromo-L-tyrosine, 3-chloro-L-tyrosine, 3-iodo-L-tyrosine and 3,5-diiodo-L-tyrosine. During thyroid hormone biosynthesis, facilitates iodide salvage by catalysing the oxidative NADPH-dependent deiodination of the halogenated by-products of thyroid hormone production, monoiodotyrosine (L-MIT) and diiodotyrosine (L-DIT). The scavanged iodide can then reenter the hormone-producing pathways. Acts more efficiently on 3-iodo-L-tyrosine than 3,5-diiodo-L-tyrosine. This is Iodotyrosine deiodinase 1 from Homo sapiens (Human).